The chain runs to 231 residues: Large ribosomal subunit protein uL1 (231 aa).

It belongs to the universal ribosomal protein uL1 family. As to quaternary structure, part of the 50S ribosomal subunit.

In terms of biological role, binds directly to 23S rRNA. The L1 stalk is quite mobile in the ribosome, and is involved in E site tRNA release. Protein L1 is also a translational repressor protein, it controls the translation of the L11 operon by binding to its mRNA. This chain is Large ribosomal subunit protein uL1, found in Methylocella silvestris (strain DSM 15510 / CIP 108128 / LMG 27833 / NCIMB 13906 / BL2).